Here is a 452-residue protein sequence, read N- to C-terminus: tRNA modification GTPase MnmE (452 aa).

(6S)-5-formyl-5,6,7,8-tetrahydrofolate contacts are provided by Arg21, Glu78, and Lys118. The 162-residue stretch at Gly214–Gly375 folds into the TrmE-type G domain. Residue Asn224 coordinates K(+). Residues Asn224–Ser229, Thr243–Thr249, and Asp268–Gly271 contribute to the GTP site. Position 228 (Ser228) interacts with Mg(2+). Residues Thr243, Ile245, and Thr248 each coordinate K(+). Thr249 serves as a coordination point for Mg(2+). (6S)-5-formyl-5,6,7,8-tetrahydrofolate is bound at residue Lys452.

It belongs to the TRAFAC class TrmE-Era-EngA-EngB-Septin-like GTPase superfamily. TrmE GTPase family. In terms of assembly, homodimer. Heterotetramer of two MnmE and two MnmG subunits. Requires K(+) as cofactor.

The protein localises to the cytoplasm. In terms of biological role, exhibits a very high intrinsic GTPase hydrolysis rate. Involved in the addition of a carboxymethylaminomethyl (cmnm) group at the wobble position (U34) of certain tRNAs, forming tRNA-cmnm(5)s(2)U34. The sequence is that of tRNA modification GTPase MnmE from Haemophilus ducreyi (strain 35000HP / ATCC 700724).